The following is a 259-amino-acid chain: Acyl-[acyl-carrier-protein]--UDP-N-acetylglucosamine O-acyltransferase (259 aa).

The protein belongs to the transferase hexapeptide repeat family. LpxA subfamily. As to quaternary structure, homotrimer.

The protein resides in the cytoplasm. The catalysed reaction is a (3R)-hydroxyacyl-[ACP] + UDP-N-acetyl-alpha-D-glucosamine = a UDP-3-O-[(3R)-3-hydroxyacyl]-N-acetyl-alpha-D-glucosamine + holo-[ACP]. It functions in the pathway glycolipid biosynthesis; lipid IV(A) biosynthesis; lipid IV(A) from (3R)-3-hydroxytetradecanoyl-[acyl-carrier-protein] and UDP-N-acetyl-alpha-D-glucosamine: step 1/6. Its function is as follows. Involved in the biosynthesis of lipid A, a phosphorylated glycolipid that anchors the lipopolysaccharide to the outer membrane of the cell. This is Acyl-[acyl-carrier-protein]--UDP-N-acetylglucosamine O-acyltransferase from Psychrobacter cryohalolentis (strain ATCC BAA-1226 / DSM 17306 / VKM B-2378 / K5).